Consider the following 185-residue polypeptide: Ribosome-recycling factor (185 aa).

Residues Asn-136 to Ala-155 are disordered.

This sequence belongs to the RRF family.

It is found in the cytoplasm. Responsible for the release of ribosomes from messenger RNA at the termination of protein biosynthesis. May increase the efficiency of translation by recycling ribosomes from one round of translation to another. The chain is Ribosome-recycling factor from Bacillus velezensis (strain DSM 23117 / BGSC 10A6 / LMG 26770 / FZB42) (Bacillus amyloliquefaciens subsp. plantarum).